The following is a 453-amino-acid chain: Serine incorporator 1 (453 aa).

Gly-2 carries the N-myristoyl glycine lipid modification. Residues 2 to 39 are Cytoplasmic-facing; that stretch reads GSVLGLCSMASWIPCLCGSAPCLLCRCCPSGNNSTVTR. Residues 40-60 form a helical membrane-spanning segment; it reads LIYALFLLVGVCVACVMLIPG. Residues 61-88 are Lumenal-facing; sequence MEEQLNKIPGFCENEKGVVPCNILVGYK. The chain crosses the membrane as a helical span at residues 89–109; the sequence is AVYRLCFGLAMFYLLLSLLMI. The Cytoplasmic portion of the chain corresponds to 110–123; the sequence is KVKSSSDPRAAVHN. Residues 124–144 traverse the membrane as a helical segment; it reads GFWFFKFAAAIAIIIGAFFIP. At 145–151 the chain is on the lumenal side; that stretch reads EGTFTTV. A helical transmembrane segment spans residues 152–172; that stretch reads WFYVGMAGAFCFILIQLVLLI. At 173–197 the chain is on the cytoplasmic side; sequence DFAHSWNESWVEKMEEGNSRCWYAA. A helical transmembrane segment spans residues 198 to 218; it reads LLSATALNYLLSLVAIVLFFV. At 219–231 the chain is on the lumenal side; sequence YYTHPASCSENKA. The chain crosses the membrane as a helical span at residues 232–252; it reads FISVNMLLCIGASVMSILPKI. The Cytoplasmic segment spans residues 253–259; it reads QESQPRS. A helical transmembrane segment spans residues 260–280; sequence GLLQSSVITVYTMYLTWSAMT. Residues 281–309 are Lumenal-facing; it reads NEPETNCNPSLLSIIGYNTTSTVPKEGQS. A helical membrane pass occupies residues 310-330; the sequence is VQWWHAQGIIGLILFLLCVFY. Residues 331 to 387 lie on the Cytoplasmic side of the membrane; it reads SSIRTSNNSQVNKLTLTSDESTLIEDGGARSDGSLEDGDDVHRAVDNERDGVTYSYS. Residue Ser-351 is modified to Phosphoserine. Phosphothreonine is present on Thr-352. 2 positions are modified to phosphoserine: Ser-361 and Ser-364. Residues 388-408 traverse the membrane as a helical segment; sequence FFHFMLFLASLYIMMTLTNWY. Residues 409-426 lie on the Lumenal side of the membrane; it reads RYEPSREMKSQWTAVWVK. Residues 427 to 447 traverse the membrane as a helical segment; it reads ISSSWIGIVLYVWTLVAPLVL. The Cytoplasmic segment spans residues 448-453; that stretch reads TNRDFD.

This sequence belongs to the TDE1 family. Interacts with SPTLC1.

It localises to the endoplasmic reticulum membrane. In terms of biological role, enhances the incorporation of serine into phosphatidylserine and sphingolipids. In Pongo abelii (Sumatran orangutan), this protein is Serine incorporator 1 (SERINC1).